An 860-amino-acid polypeptide reads, in one-letter code: DNA mismatch repair protein MutS (860 aa).

Position 620 to 627 (620 to 627) interacts with ATP; that stretch reads GPNMGGKS.

The protein belongs to the DNA mismatch repair MutS family.

Its function is as follows. This protein is involved in the repair of mismatches in DNA. It is possible that it carries out the mismatch recognition step. This protein has a weak ATPase activity. In Dechloromonas aromatica (strain RCB), this protein is DNA mismatch repair protein MutS.